Reading from the N-terminus, the 283-residue chain is Zip homologous protein 4 (283 aa).

The segment at 6 to 50 adopts an RING-type zinc-finger fold; the sequence is CFRCYKFPSKQIEFYLTNCMHMFCIECERLCHPPEEEPLKCIQCS. 2 disordered regions span residues 149–175 and 201–283; these read KKQL…SSRS and TKAQ…RNSQ. A compositionally biased stretch (polar residues) spans 163–175; sequence PRSNSLKVASSRS. A compositionally biased stretch (low complexity) spans 202 to 216; the sequence is KAQAKAEAEAEAPAK. Over residues 220 to 235 the composition is skewed to polar residues; the sequence is SKAQTTKCTSNYQSHP. Positions 267–283 are enriched in basic and acidic residues; sequence KKHEAQREKHKEHRNSQ.

Interacts with zhp-3; the interaction is required for their localization along paired chromosomes and stability, and for the formation of chiasma during meiotic recombination. Expressed in the germline.

The protein localises to the chromosome. In terms of biological role, recruited co-dependently with zhp-3 to the synaptonemal complex between homologous chromosome pairs to regulate the formation and number of crossover events between homologs during meiotic recombination. In the early stages of pachytene, in complex with zhp-4, recruited by the zhp-1-zhp-2 heterodimer to designated crossover sites along the recombination intermediate to stabilize other pro-crossover factors such as rmh-1, msh-5 and cosa-1. This in turn facilitates crossover and promotes the formation of chiasma in each meiotic nucleus at the late pachytene stage of meiosis. Negatively regulates double strand break formation to promote formation of the crossover intermediate. The sequence is that of Zip homologous protein 4 from Caenorhabditis elegans.